A 265-amino-acid chain; its full sequence is Inositol-1-monophosphatase (265 aa).

Positions 69, 87, 89, and 90 each coordinate Mg(2+). Glu-69 serves as a coordination point for substrate. Substrate-binding positions include 89 to 92 (IDGT), Arg-185, and Asp-214. Asp-214 contributes to the Mg(2+) binding site.

Belongs to the inositol monophosphatase superfamily. It depends on Mg(2+) as a cofactor.

It catalyses the reaction a myo-inositol phosphate + H2O = myo-inositol + phosphate. The catalysed reaction is a ribonucleoside 5'-phosphate + H2O = a ribonucleoside + phosphate. Its function is as follows. Hydrolyzes myo-inositol monophosphate. Catalyzes the dephosphorylation of GMP and IMP. This chain is Inositol-1-monophosphatase, found in Bacillus subtilis (strain 168).